A 124-amino-acid chain; its full sequence is Large ribosomal subunit protein bL20c (124 aa).

This sequence belongs to the bacterial ribosomal protein bL20 family.

The protein localises to the plastid. It is found in the chloroplast. Its function is as follows. Binds directly to 23S ribosomal RNA and is necessary for the in vitro assembly process of the 50S ribosomal subunit. It is not involved in the protein synthesizing functions of that subunit. The protein is Large ribosomal subunit protein bL20c of Stigeoclonium helveticum (Green alga).